The following is a 763-amino-acid chain: Phosphoglycerol transferase I (763 aa).

4 consecutive transmembrane segments (helical) span residues M1–A21, W26–Y46, I77–V97, and V108–F128.

It belongs to the OpgB family.

Its subcellular location is the cell inner membrane. It catalyses the reaction a phosphatidylglycerol + a membrane-derived-oligosaccharide D-glucose = a 1,2-diacyl-sn-glycerol + a membrane-derived-oligosaccharide 6-(glycerophospho)-D-glucose.. It functions in the pathway glycan metabolism; osmoregulated periplasmic glucan (OPG) biosynthesis. In terms of biological role, transfers a phosphoglycerol residue from phosphatidylglycerol to the membrane-bound nascent glucan backbones. This Salmonella choleraesuis (strain SC-B67) protein is Phosphoglycerol transferase I.